A 236-amino-acid polypeptide reads, in one-letter code: Baculoviral IAP repeat-containing protein 8 (236 aa).

The BIR repeat unit spans residues 7–70 (RLITFGTWMY…KWYPGCKYLL (64 aa)). Residues Cys-39, Cys-42, His-59, and Cys-66 each contribute to the Zn(2+) site. The RING-type zinc-finger motif lies at 189–224 (CKICMDRHIAVVFIPCGHLVTCKQCAEAVDRCPMCS).

It belongs to the IAP family. Binds to caspase-9.

Its subcellular location is the cytoplasm. Protects against apoptosis mediated by BAX. This Pan troglodytes (Chimpanzee) protein is Baculoviral IAP repeat-containing protein 8 (BIRC8).